Here is a 65-residue protein sequence, read N- to C-terminus: Diapause-specific peptide (65 aa).

An N-terminal signal peptide occupies residues 1–24; the sequence is MGAALKMTIFLLIVACAMIATTEA. Cystine bridges form between Cys-31–Cys-45, Cys-35–Cys-57, and Cys-46–Cys-64.

In terms of tissue distribution, highly expressed in the fat body.

The protein resides in the secreted. Functionally, has antifungal activity against T.rubrum. Blocks voltage-dependent N-type calcium channels (Cav2.2 / CACNA1B). The chain is Diapause-specific peptide from Gastrophysa atrocyanea (Leaf beetle).